We begin with the raw amino-acid sequence, 363 residues long: S-adenosylmethionine:tRNA ribosyltransferase-isomerase (363 aa).

This sequence belongs to the QueA family. Monomer.

Its subcellular location is the cytoplasm. It catalyses the reaction 7-aminomethyl-7-carbaguanosine(34) in tRNA + S-adenosyl-L-methionine = epoxyqueuosine(34) in tRNA + adenine + L-methionine + 2 H(+). It functions in the pathway tRNA modification; tRNA-queuosine biosynthesis. Functionally, transfers and isomerizes the ribose moiety from AdoMet to the 7-aminomethyl group of 7-deazaguanine (preQ1-tRNA) to give epoxyqueuosine (oQ-tRNA). The polypeptide is S-adenosylmethionine:tRNA ribosyltransferase-isomerase (Brucella abortus (strain S19)).